The primary structure comprises 225 residues: Thymidylate kinase (225 aa).

10–17 (GIDGAGKS) contacts ATP.

It belongs to the thymidylate kinase family.

The catalysed reaction is dTMP + ATP = dTDP + ADP. Its function is as follows. Phosphorylation of dTMP to form dTDP in both de novo and salvage pathways of dTTP synthesis. The protein is Thymidylate kinase of Polaromonas sp. (strain JS666 / ATCC BAA-500).